A 94-amino-acid polypeptide reads, in one-letter code: Cyclin-dependent kinases regulatory subunit (94 aa).

This sequence belongs to the CKS family. As to quaternary structure, forms a homohexamer that can probably bind six kinase subunits. Interacts with cdk-1.

The protein resides in the nucleus. Functionally, binds to the catalytic subunit of the cyclin dependent kinases and is essential for their biological function. Has a role in the exit from M phase during early mitotic cell division. More specifically, thought to act by degrading B-type cyclins that causes breakdown of nuclear envelope and exit mitosis. The sequence is that of Cyclin-dependent kinases regulatory subunit (cks-1) from Caenorhabditis elegans.